Here is a 362-residue protein sequence, read N- to C-terminus: Vignain (362 aa).

Residues 1–20 (MATKKLLWVVLSFSLVLGVA) form the signal peptide. Positions 21 to 131 (NSFDFHDKDL…YEKVVSVPPS (111 aa)) are cleaved as a propeptide — activation peptide. 3 disulfides stabilise this stretch: Cys149–Cys191, Cys183–Cys224, and Cys282–Cys334. Cys152 is an active-site residue. Active-site residues include His288 and Asn309. 2 N-linked (GlcNAc...) asparagine glycosylation sites follow: Asn326 and Asn346. The Prevents secretion from ER signature appears at 359–362 (KDEL).

This sequence belongs to the peptidase C1 family. In terms of assembly, monomer.

The protein localises to the endoplasmic reticulum lumen. In terms of biological role, thought to be involved in the hydrolysis of stored seed proteins. The chain is Vignain from Phaseolus vulgaris (Kidney bean).